The primary structure comprises 317 residues: MTTFIQNPTQQLQLRKLTGRIGAEISGIHLSSELDSSTVQFIHDALLEHKVLFFRGQQHLGDTEQEKFAELFGSPVKHPTVPAADGTDFIFELDSQKGARANSWHTDVTFVDAYPKISILRGLIIPETGGDTTWANTETAYEDLPELLKQFAEQLVAVHSNEYDYGGPKQNVEPEQLERLKKVFVSTKYETEHPVVIVHPETGKKSLLLGHFFKRLVGFSQSDSQLLFNILQEKVTRPENTVRWQWQEGDVVIWDNRSTQHYAVNDYGDQHRVVRRITLAGEVTTGAHGLKGKTTLPKDLSAEQLEKAKLHAVLNAN.

Residue His-78 participates in substrate binding. Positions 105 and 107 each coordinate Fe cation. Substrate is bound at residue Val-108. Thr-132 lines the 2-oxoglutarate pocket. Residue His-261 coordinates Fe cation. The 2-oxoglutarate site is built by Arg-272 and Arg-276.

This sequence belongs to the TfdA dioxygenase family. Homotetramer. Fe(2+) is required as a cofactor.

Its function is as follows. Alpha-ketoglutarate-dependent dioxygenase that in vitro catalyzes the oxygenolytic release of sulfite from hexylsulfate. This is Alkylsulfatase from Acinetobacter baylyi (strain ATCC 33305 / BD413 / ADP1).